Here is a 293-residue protein sequence, read N- to C-terminus: Pyridoxal 5'-phosphate synthase subunit PdxS (293 aa).

Aspartate 23 is a binding site for D-ribose 5-phosphate. The Schiff-base intermediate with D-ribose 5-phosphate role is filled by lysine 80. Glycine 152 is a D-ribose 5-phosphate binding site. Residue arginine 164 participates in D-glyceraldehyde 3-phosphate binding. D-ribose 5-phosphate contacts are provided by residues glycine 213 and 234-235 (GS).

The protein belongs to the PdxS/SNZ family. As to quaternary structure, in the presence of PdxT, forms a dodecamer of heterodimers.

The enzyme catalyses aldehydo-D-ribose 5-phosphate + D-glyceraldehyde 3-phosphate + L-glutamine = pyridoxal 5'-phosphate + L-glutamate + phosphate + 3 H2O + H(+). The protein operates within cofactor biosynthesis; pyridoxal 5'-phosphate biosynthesis. In terms of biological role, catalyzes the formation of pyridoxal 5'-phosphate from ribose 5-phosphate (RBP), glyceraldehyde 3-phosphate (G3P) and ammonia. The ammonia is provided by the PdxT subunit. Can also use ribulose 5-phosphate and dihydroxyacetone phosphate as substrates, resulting from enzyme-catalyzed isomerization of RBP and G3P, respectively. This Chloroflexus aurantiacus (strain ATCC 29366 / DSM 635 / J-10-fl) protein is Pyridoxal 5'-phosphate synthase subunit PdxS.